The following is an 85-amino-acid chain: Large ribosomal subunit protein bL27 (85 aa).

This sequence belongs to the bacterial ribosomal protein bL27 family.

In Solibacter usitatus (strain Ellin6076), this protein is Large ribosomal subunit protein bL27.